Here is a 443-residue protein sequence, read N- to C-terminus: Probable serine transporter (443 aa).

The Cytoplasmic segment spans residues 1-48 (MEIASNKGVIADASTPAGRAGMSESEWREAIKFDSTDTGWVIMSIGMA). Residues 49–69 (IGAGIVFLPVQVGLMGLWVFL) form a helical membrane-spanning segment. The Periplasmic portion of the chain corresponds to 70–110 (LSSVIGYPAMYLFQRLFINTLAESPECKDYPSVISGYLGKN). Residues 111–131 (WGILLGALYFVMLVIWMFVYS) traverse the membrane as a helical segment. Residues 132–149 (TAITNDSASYLHTFGVTE) are Cytoplasmic-facing. Residues 150–170 (GLLSDSPFYGLVLICILVAIS) traverse the membrane as a helical segment. Residues 171-182 (SRGEKLLFKIST) are Periplasmic-facing. The helical transmembrane segment at 183-203 (GMVLTKLLVVAALGVSMVGMW) threads the bilayer. The Cytoplasmic portion of the chain corresponds to 204–214 (HLYNVGSLPPL). Residues 215-235 (GLLVKNAIITLPFTLTSILFI) traverse the membrane as a helical segment. At 236 to 264 (QTLSPMVISYRSREKSIEVARHKALRAMN) the chain is on the periplasmic side. The helical transmembrane segment at 265–285 (IAFGILFVTVFFYAVSFTLAM) threads the bilayer. At 286-297 (GHDEAVKAYEQN) the chain is on the cytoplasmic side. A run of 2 helical transmembrane segments spans residues 298-318 (ISAL…WVKV) and 319-339 (VSVI…YLGF). Residues 340 to 367 (REATQGIVMNILRRKMPAEKINENLVQR) lie on the Cytoplasmic side of the membrane. A helical transmembrane segment spans residues 368–388 (GIMIFAILLAWSAIVLNAPVL). Position 389 (Ser389) is a topological domain, periplasmic. Residues 390–410 (FTSICSPIFGMVGCLIPAWLV) traverse the membrane as a helical segment. At 411–421 (YKVPALHKYKG) the chain is on the cytoplasmic side. A helical transmembrane segment spans residues 422 to 442 (MSLYLIIVTGLLLCVSPFLAF). Residue Ser443 is a topological domain, periplasmic.

It belongs to the amino acid/polyamine transporter 2 family. SdaC/TdcC subfamily.

The protein localises to the cell inner membrane. Plays a role in L-cysteine detoxification. May transport both D- and L-serine. In Escherichia coli (strain K12), this protein is Probable serine transporter (dlsT).